Here is a 142-residue protein sequence, read N- to C-terminus: Hemoglobin subunit alpha (142 aa).

The Globin domain occupies 1 to 142 (GLTAADKTLI…VEKALFETYR (142 aa)). Histidine 59 is a binding site for O2. Histidine 88 lines the heme b pocket.

The protein belongs to the globin family. Heterotetramer of two alpha chains and two beta chains (an easy dimerization is also reported). As to expression, red blood cells.

In terms of biological role, involved in oxygen transport from the lung to the various peripheral tissues. The polypeptide is Hemoglobin subunit alpha (HBA) (Latimeria chalumnae (Coelacanth)).